The chain runs to 139 residues: uncharacterized protein (139 aa).

2 helical membrane passes run 35–55 (AYFK…AAAA) and 119–139 (CCLF…VFCV).

It localises to the membrane. This is an uncharacterized protein from Saccharomyces cerevisiae (strain ATCC 204508 / S288c) (Baker's yeast).